A 1005-amino-acid chain; its full sequence is Mediator of RNA polymerase II transcription subunit 24 (1005 aa).

This sequence belongs to the Mediator complex subunit 24 family. As to quaternary structure, component of the Mediator complex.

It localises to the nucleus. Component of the Mediator complex, a coactivator involved in the regulated transcription of nearly all RNA polymerase II-dependent genes. Mediator functions as a bridge to convey information from gene-specific regulatory proteins to the basal RNA polymerase II transcription machinery. Mediator is recruited to promoters by direct interactions with regulatory proteins and serves as a scaffold for the assembly of a functional preinitiation complex with RNA polymerase II and the general transcription factors. The polypeptide is Mediator of RNA polymerase II transcription subunit 24 (MED24) (Aedes aegypti (Yellowfever mosquito)).